Reading from the N-terminus, the 152-residue chain is uncharacterized protein (152 aa).

The signal sequence occupies residues 1-16; the sequence is MRKLLISLALAIPVFA. The region spanning 20 to 135 is the Cytochrome c domain; sequence NLLQKGYEVY…AVAYWLYHNY (116 aa). Cys33, Cys36, and His37 together coordinate heme c.

This is an uncharacterized protein from Aquifex aeolicus (strain VF5).